The following is a 171-amino-acid chain: Co-chaperone protein HscB (171 aa).

Residues 2-74 (DYFTLFGLPA…LTRAEYLLSL (73 aa)) form the J domain.

It belongs to the HscB family. In terms of assembly, interacts with HscA and stimulates its ATPase activity. Interacts with IscU.

In terms of biological role, co-chaperone involved in the maturation of iron-sulfur cluster-containing proteins. Seems to help targeting proteins to be folded toward HscA. This chain is Co-chaperone protein HscB, found in Salmonella typhimurium (strain LT2 / SGSC1412 / ATCC 700720).